Here is a 210-residue protein sequence, read N- to C-terminus: N-(5'-phosphoribosyl)anthranilate isomerase (210 aa).

Belongs to the TrpF family.

It catalyses the reaction N-(5-phospho-beta-D-ribosyl)anthranilate = 1-(2-carboxyphenylamino)-1-deoxy-D-ribulose 5-phosphate. The protein operates within amino-acid biosynthesis; L-tryptophan biosynthesis; L-tryptophan from chorismate: step 3/5. The polypeptide is N-(5'-phosphoribosyl)anthranilate isomerase (Pseudomonas fluorescens (strain SBW25)).